The chain runs to 142 residues: Peptide methionine sulfoxide reductase MsrB (142 aa).

A MsrB domain is found at 3-126 (KEELKKKLSP…NSAALRFIPF (124 aa)). Cys115 (nucleophile) is an active-site residue.

It belongs to the MsrB Met sulfoxide reductase family.

The enzyme catalyses L-methionyl-[protein] + [thioredoxin]-disulfide + H2O = L-methionyl-(R)-S-oxide-[protein] + [thioredoxin]-dithiol. This Lactococcus lactis subsp. cremoris (strain SK11) protein is Peptide methionine sulfoxide reductase MsrB.